A 720-amino-acid chain; its full sequence is ATP-dependent RNA helicase glh-3 (720 aa).

Residues 1-11 show a composition bias toward polar residues; the sequence is MDKSPTKTSIR. Disordered regions lie at residues 1–34 and 125–180; these read MDKS…SCIK and LNSR…SYGN. 2 stretches are compositionally biased toward basic and acidic residues: residues 141–154 and 162–172; these read NVKE…RSDD and SAKDEERDRDS. 2 consecutive CCHC-type zinc fingers follow at residues 202–219 and 222–239; these read NTCF…ECSA and RECA…ECAS. Residues 298-326 carry the Q motif motif; the sequence is KSFSDSDIPQSMRRNVERAGYTRTTPIQQ. The Helicase ATP-binding domain maps to 329 to 513; sequence LPLVADGKDI…RKLLREDYTM (185 aa). 342-349 is an ATP binding site; sequence AQTGSGKT. The DEAD box motif lies at 456 to 459; it reads DEAD. The 150-residue stretch at 549-698 folds into the Helicase C-terminal domain; that stretch reads DIDTYTTEKN…VVPSWMKEAA (150 aa). Residues 696-720 form a disordered region; sequence EAAGGTSNPNKFEKSIDTEEPEEAW.

Belongs to the DEAD box helicase family. DDX4/VASA subfamily. As to quaternary structure, interacts with csn-5. Interacts (via C-terminus) with kgb-1. Interacts with zyx-1.

It is found in the cytoplasm. The enzyme catalyses ATP + H2O = ADP + phosphate + H(+). Probable ATP-binding RNA helicase. The sequence is that of ATP-dependent RNA helicase glh-3 from Caenorhabditis elegans.